A 556-amino-acid chain; its full sequence is Testis-specific protein 10-interacting protein (556 aa).

Over residues 1-16 the composition is skewed to polar residues; the sequence is MGQDTDMLNTYQQLVR. 4 disordered regions span residues 1-31, 50-102, 123-155, and 179-309; these read MGQD…LQAP, GCLG…LLPR, LQPS…ANLP, and GGVS…QWRK. The segment covering 208-219 has biased composition (polar residues); the sequence is GSASDKQVQLQS. The span at 244–258 shows a compositional bias: acidic residues; the sequence is SEEEQFSEATEEAEE. Residues 289–301 show a composition bias toward polar residues; the sequence is QGQSQGSSPSFNN. Residues 379-464 are a coiled coil; sequence RQEATRSLLQ…LQGIQHRVQA (86 aa). The interval 503–556 is disordered; that stretch reads AGKVDREGTPRKPRSHRSMGVRMEHSPQRPPRTEPTGSQPDRHYNPSLDPECSP.

In Homo sapiens (Human), this protein is Testis-specific protein 10-interacting protein (TSGA10IP).